A 1162-amino-acid polypeptide reads, in one-letter code: Nucleoporin nup132 (1162 aa).

It belongs to the nucleoporin Nup133 family. Component of the npc107-120 complex which consists of nup85, nup107, nup120, nup131, nup132 and seh1. Interacts with nup107.

It is found in the nucleus envelope. In terms of biological role, functions as a component of the nuclear pore complex (NPC). NPC components, collectively referred to as nucleoporins (NUPs), can play the role of both NPC structural components and of docking or interaction partners for transiently associated nuclear transport factors. Active directional transport is assured by both, a Phe-Gly (FG) repeat affinity gradient for these transport factors across the NPC and a transport cofactor concentration gradient across the nuclear envelope. The protein is Nucleoporin nup132 (nup132) of Schizosaccharomyces pombe (strain 972 / ATCC 24843) (Fission yeast).